The chain runs to 113 residues: Ig heavy chain V-III region T957 (113 aa).

Residues 1 to 113 enclose the Ig-like domain; sequence EVKLEESGGG…YWGQGTLVTV (113 aa). Cysteines 22 and 98 form a disulfide.

This chain is Ig heavy chain V-III region T957, found in Mus musculus (Mouse).